Here is a 465-residue protein sequence, read N- to C-terminus: CUGBP Elav-like family member 3 (465 aa).

RRM domains follow at residues 7 to 88 (IKLF…PADS) and 95 to 174 (KLFV…FADT). Disordered regions lie at residues 283 to 311 (PVPTQPTGQPAPDALYPNGVHPYPAQSPA) and 345 to 379 (PPALVAQQPPPPPQQQQQQQQQQQQQQQQREGPDG). Residues 345 to 358 (PPALVAQQPPPPPQ) show a composition bias toward pro residues. A compositionally biased stretch (low complexity) spans 359-373 (QQQQQQQQQQQQQQQ). The region spanning 380-458 (CNIFIYHLPQ…KRLKVQLKRP (79 aa)) is the RRM 3 domain.

Belongs to the CELF/BRUNOL family.

It localises to the nucleus. The protein resides in the cytoplasm. RNA-binding protein involved in the regulation of pre-mRNA alternative splicing. Mediates exon inclusion and/or exclusion in pre-mRNA that are subject to tissue-specific and developmentally regulated alternative splicing. Specifically activates exon 5 inclusion of cardiac isoforms of TNNT2 during heart remodeling at the juvenile to adult transition. Activates the splicing of MAPT/Tau exon 10. Binds to muscle-specific splicing enhancer (MSE) intronic sites flanking the alternative exon 5 of TNNT2 pre-mRNA. The chain is CUGBP Elav-like family member 3 (Celf3) from Mus musculus (Mouse).